The chain runs to 207 residues: Cytochrome c biogenesis ATP-binding export protein CcmA 1 (207 aa).

The ABC transporter domain occupies 6–207 (LEALDLAGVR…KTSQTVRMGA (202 aa)). 38-45 (GENGSGKT) is a binding site for ATP.

It belongs to the ABC transporter superfamily. CcmA exporter (TC 3.A.1.107) family. As to quaternary structure, the complex is composed of two ATP-binding proteins (CcmA) and two transmembrane proteins (CcmB).

Its subcellular location is the cell inner membrane. It catalyses the reaction heme b(in) + ATP + H2O = heme b(out) + ADP + phosphate + H(+). Part of the ABC transporter complex CcmAB involved in the biogenesis of c-type cytochromes; once thought to export heme, this seems not to be the case, but its exact role is uncertain. Responsible for energy coupling to the transport system. The chain is Cytochrome c biogenesis ATP-binding export protein CcmA 1 from Cupriavidus metallidurans (strain ATCC 43123 / DSM 2839 / NBRC 102507 / CH34) (Ralstonia metallidurans).